The chain runs to 744 residues: Kinesin-like protein KIF2A (744 aa).

A disordered region spans residues 66–186 (LVPDEEIEPS…QQELREKRAQ (121 aa)). The residue at position 75 (S75) is a Phosphoserine. Residues T78 and T97 each carry the phosphothreonine modification. S100 carries the post-translational modification Phosphoserine. Residue K102 is modified to N6-acetyllysine. Positions 123–140 (FPEQSSSAQQNGSVSDIS) are enriched in polar residues. 2 positions are modified to phosphoserine: S135 and S140. Positions 154-187 (RRKSNCVKEVEKLQEKREKRRLQQQELREKRAQD) form a coiled coil. Residues 159–186 (CVKEVEKLQEKREKRRLQQQELREKRAQ) show a composition bias toward basic and acidic residues. The region spanning 223-553 (RICVCVRKRP…LRYANRVKEF (331 aa)) is the Kinesin motor domain. 313–320 (GQTGSGKT) is a binding site for ATP. Residues 698–737 (ATQLEAILEQKIDILTELRDKVKSFRAALQEEEQASKQIN) adopt a coiled-coil conformation.

The protein belongs to the TRAFAC class myosin-kinesin ATPase superfamily. Kinesin family. MCAK/KIF2 subfamily. As to quaternary structure, interacts with AURKA and PLK1. Interacts with PSRC1. Interacts with MCRS1; the interaction enhances recruitment of KIF2A to the minus ends of spindle microtubules which promotes chromosome alignment.

It localises to the cytoplasm. It is found in the cytoskeleton. Its subcellular location is the microtubule organizing center. The protein localises to the centrosome. The protein resides in the spindle pole. It localises to the spindle. Its function is as follows. Plus end-directed microtubule-dependent motor required for normal brain development. May regulate microtubule dynamics during axonal growth. Required for normal progression through mitosis. Required for normal congress of chromosomes at the metaphase plate. Required for normal spindle dynamics during mitosis. Promotes spindle turnover. Implicated in formation of bipolar mitotic spindles. Has microtubule depolymerization activity. The protein is Kinesin-like protein KIF2A of Pongo abelii (Sumatran orangutan).